The primary structure comprises 426 residues: 3-phosphoshikimate 1-carboxyvinyltransferase (426 aa).

The 3-phosphoshikimate site is built by Lys22, Ser23, and Arg27. A phosphoenolpyruvate-binding site is contributed by Lys22. The phosphoenolpyruvate site is built by Gly96 and Arg124. 3-phosphoshikimate-binding residues include Ser170, Ser171, Gln172, Ser198, Asp314, Asn337, and Lys341. Phosphoenolpyruvate is bound at residue Gln172. Asp314 (proton acceptor) is an active-site residue. Phosphoenolpyruvate-binding residues include Arg345, Arg387, and Lys412.

The protein belongs to the EPSP synthase family. Monomer.

Its subcellular location is the cytoplasm. The catalysed reaction is 3-phosphoshikimate + phosphoenolpyruvate = 5-O-(1-carboxyvinyl)-3-phosphoshikimate + phosphate. Its pathway is metabolic intermediate biosynthesis; chorismate biosynthesis; chorismate from D-erythrose 4-phosphate and phosphoenolpyruvate: step 6/7. Functionally, catalyzes the transfer of the enolpyruvyl moiety of phosphoenolpyruvate (PEP) to the 5-hydroxyl of shikimate-3-phosphate (S3P) to produce enolpyruvyl shikimate-3-phosphate and inorganic phosphate. The polypeptide is 3-phosphoshikimate 1-carboxyvinyltransferase (Shewanella pealeana (strain ATCC 700345 / ANG-SQ1)).